Reading from the N-terminus, the 565-residue chain is NAD-dependent malic enzyme (565 aa).

The active-site Proton donor is Y104. An NAD(+)-binding site is contributed by R157. K175 acts as the Proton acceptor in catalysis. A divalent metal cation is bound by residues E246, D247, and D270. NAD(+) is bound by residues D270 and N418.

This sequence belongs to the malic enzymes family. As to quaternary structure, homotetramer. Requires Mg(2+) as cofactor. The cofactor is Mn(2+).

The catalysed reaction is (S)-malate + NAD(+) = pyruvate + CO2 + NADH. The enzyme catalyses oxaloacetate + H(+) = pyruvate + CO2. This is NAD-dependent malic enzyme from Yersinia pseudotuberculosis serotype O:1b (strain IP 31758).